Here is a 258-residue protein sequence, read N- to C-terminus: Global transcriptional regulator CodY (258 aa).

Residues 1–156 (MSSLLTKTRM…SATIVGMEML (156 aa)) form a GAF domain region. A DNA-binding region (H-T-H motif) is located at residues 204 to 223 (ASKIADKVGITRSVIVNALR).

The protein belongs to the CodY family.

The protein resides in the cytoplasm. Its function is as follows. DNA-binding global transcriptional regulator which is involved in the adaptive response to starvation and acts by directly or indirectly controlling the expression of numerous genes in response to nutrient availability. During rapid exponential growth, CodY is highly active and represses genes whose products allow adaptation to nutrient depletion. The chain is Global transcriptional regulator CodY from Clostridium beijerinckii (strain ATCC 51743 / NCIMB 8052) (Clostridium acetobutylicum).